The chain runs to 417 residues: Guanine nucleotide-exchange factor SEC12 (417 aa).

The Cytoplasmic segment spans residues 1-388 (MGRRRGVELY…QLHLLPSRRS (388 aa)). Position 10 is a 3'-nitrotyrosine (Y10). The disordered stretch occupies residues 101 to 135 (KGSKAEKSGSKEQGPRQRKGAPPAEKKSGAQVHPE). A compositionally biased stretch (basic and acidic residues) spans 103-115 (SKAEKSGSKEQGP). WD repeat units lie at residues 152 to 191 (SNEP…KVLE), 194 to 232 (AHEG…TQLQ), and 298 to 337 (CGHE…RLYY). Residues 389–409 (VPVWLLLLLCVGLIIVTILLL) traverse the membrane as a helical segment. At 410–417 (QTAFPGFL) the chain is on the lumenal side.

As to quaternary structure, interacts with SAR1B (GDP-bound form). Interacts with MIA2; recruits PREB to endoplasmic reticulum exit sites. Interacts with CIDEB; facilitating loading of SCAP-SREBP into COPII vesicles.

It localises to the endoplasmic reticulum membrane. The protein resides in the nucleus. Its function is as follows. Guanine nucleotide exchange factor (GEF) that regulates the assembly of the coat protein complex II/COPII in endoplasmic reticulum (ER) to Golgi vesicle-mediated transport. Selectively activates SAR1A and SAR1B by promoting the exchange of guanosine diphosphate (GDP) for guanosine triphosphate (GTP) in these small GTPases. In their activated GTP-bound state, SAR1A and SAR1B insert into the membrane of the endoplasmic reticulum where they recruit the remainder of the coat protein complex II/COPII which is responsible for both the sorting of proteins and the deformation and budding of membranes into vesicles destined to the Golgi. Was first identified based on its probable role in the regulation of pituitary gene transcription. Binds to the prolactin gene (PRL) promoter and seems to activate transcription. This is Guanine nucleotide-exchange factor SEC12 from Mus musculus (Mouse).